The following is a 105-amino-acid chain: Small ribosomal subunit protein uS10 (105 aa).

The protein belongs to the universal ribosomal protein uS10 family. In terms of assembly, part of the 30S ribosomal subunit.

Involved in the binding of tRNA to the ribosomes. This chain is Small ribosomal subunit protein uS10, found in Picosynechococcus sp. (strain ATCC 27264 / PCC 7002 / PR-6) (Agmenellum quadruplicatum).